The chain runs to 70 residues: DNA-directed RNA polymerase subunit omega (70 aa).

This sequence belongs to the RNA polymerase subunit omega family. As to quaternary structure, the RNAP catalytic core consists of 2 alpha, 1 beta, 1 beta' and 1 omega subunit. When a sigma factor is associated with the core the holoenzyme is formed, which can initiate transcription.

It carries out the reaction RNA(n) + a ribonucleoside 5'-triphosphate = RNA(n+1) + diphosphate. In terms of biological role, promotes RNA polymerase assembly. Latches the N- and C-terminal regions of the beta' subunit thereby facilitating its interaction with the beta and alpha subunits. The polypeptide is DNA-directed RNA polymerase subunit omega (Staphylococcus haemolyticus (strain JCSC1435)).